Reading from the N-terminus, the 300-residue chain is ETS homologous factor (300 aa).

The PNT domain occupies 29 to 115 (STCNVSSGFF…SNLQHLKWNG (87 aa)). The interval 179 to 204 (LPIAESPDTKKEQDHPTKPHTKKHNP) is disordered. Over residues 185–195 (PDTKKEQDHPT) the composition is skewed to basic and acidic residues. Positions 207-289 (THLWEFIRDI…DGRRLVYKFG (83 aa)) form a DNA-binding region, ETS.

Belongs to the ETS family.

The protein localises to the nucleus. Functionally, transcriptional activator that may play a role in regulating epithelial cell differentiation and proliferation. May act as a repressor for a specific subset of ETS/AP-1-responsive genes, and as a modulator of the nuclear response to mitogen-activated protein kinase signaling cascades. Binds to DNA sequences containing the consensus nucleotide core sequence GGAA. Involved in regulation of TNFRSF10B/DR5 expression through Ets-binding sequences on the TNFRSF10B/DR5 promoter. This Bos taurus (Bovine) protein is ETS homologous factor (EHF).